We begin with the raw amino-acid sequence, 405 residues long: ATP-sensitive inward rectifier potassium channel 15 (405 aa).

Topologically, residues 1 to 90 (MVARWVKGSE…LQDLWTTVID (90 aa)) are cytoplasmic. Residues 91 to 117 (MKWRYKLTLFAATFVMTWFLFGVVYYA) traverse the membrane as a helical segment. Residues 118 to 143 (IAFIHGDLELGESNSNHTPCIMKVDS) lie on the Extracellular side of the membrane. Residues 144-160 (LTGAFLFSLESQTTIGY) constitute an intramembrane region (helical; Pore-forming). Residues 157–162 (TIGYGV) carry the Selectivity filter motif. Residues 161–169 (GVRSITEEC) lie on the Extracellular side of the membrane. The helical transmembrane segment at 170–195 (PHAIFLLVAQLVITTLIEIFITGTFL) threads the bilayer. Over 196-405 (AKIARPKKRA…RSLLLQQSNV (210 aa)) the chain is Cytoplasmic.

This sequence belongs to the inward rectifier-type potassium channel (TC 1.A.2.1) family. KCNJ15 subfamily. In terms of assembly, can form heteromultimeric channels with Kir5.1/KCNJ16. Interacts with PATJ.

The protein resides in the membrane. The protein localises to the cell membrane. The enzyme catalyses K(+)(in) = K(+)(out). Its activity is regulated as follows. Channel activity is regulated by variations of cytosolic pH; reversibly inhibited by acidic pH values. Inhibited by Ba(2+) and Cs(+) in a voltage-dependent manner. In terms of biological role, inward rectifier potassium channels are characterized by a greater tendency to allow potassium to flow into the cell rather than out of it. Their voltage dependence is regulated by the concentration of extracellular potassium; as external potassium is raised, the voltage range of the channel opening shifts to more positive voltages. The inward rectification is mainly due to the blockage of outward current by internal magnesium. The chain is ATP-sensitive inward rectifier potassium channel 15 (Kcnj15) from Rattus norvegicus (Rat).